Reading from the N-terminus, the 318-residue chain is MDNGVQEGSVRLGEDAEAVLAGAVSTKANHRQVLSSLLSGALAGALAKTAVAPLDRTKIIFQVSSKRFSAKEAFRLLYFTYLNEGFLSLWRGNSATMVRVIPYAAIQFSAHEEYKRILGHYYGFRGEALPPWPRLLAGALAGTTAASLTYPLDLVRARMAVTPKEMYSNIFHVFIRISREEGLKTLYFGFTPTVLGVIPYAGLSFFTYESLKSLHREYSGRPQPYPFERMVFGACAGLIGQSASYPLDVVRRRMQTAGVTGHQHGSILSTLRSIVREEGAVRGLYKGLSMNWLKGPIAVGISFTTFDLMQILLRQLQS.

3 Solcar repeats span residues 31–117 (RQVL…YKRI), 129–214 (LPPW…LKSL), and 224–312 (PYPF…MQIL). A run of 6 helical transmembrane segments spans residues 33–53 (VLSS…AVAP), 89–109 (LWRG…IQFS), 135–155 (LLAG…LDLV), 186–206 (LYFG…LSFF), 230–250 (MVFG…LDVV), and 293–313 (LKGP…QILL).

It belongs to the mitochondrial carrier (TC 2.A.29) family. Widely expressed. Highly expressed in adipose, followed by hypothalamus and brain coronal sections containing corpus callosum, fornix, thalamus, hypothalamus, optic chiasm, pons, midbrain, and cerebellum.

The protein resides in the mitochondrion inner membrane. It carries out the reaction ADP(out) + CoA(in) = ADP(in) + CoA(out). The catalysed reaction is 3'-dephospho-CoA(in) + ADP(out) = 3'-dephospho-CoA(out) + ADP(in). It catalyses the reaction adenosine 3',5'-bisphosphate(in) + ADP(out) = adenosine 3',5'-bisphosphate(out) + ADP(in). The enzyme catalyses AMP(in) + ADP(out) = AMP(out) + ADP(in). It carries out the reaction dADP(in) + ADP(out) = dADP(out) + ADP(in). The catalysed reaction is ADP(in) + ATP(out) = ADP(out) + ATP(in). Mitochondrial carrier mediating the transport of coenzyme A (CoA) in mitochondria in exchange for intramitochondrial (deoxy)adenine nucleotides and adenosine 3',5'-diphosphate. The chain is Mitochondrial coenzyme A transporter SLC25A42 (Slc25a42) from Rattus norvegicus (Rat).